The chain runs to 227 residues: Extracellular small neutral protease (227 aa).

An N-terminal signal peptide occupies residues 1–29 (MRITLPLLSTAVGLGLTAAVLGTGPAATA). The propeptide occupies 30-42 (AAPQEPVRAAQLG). Positions 156 and 158 each coordinate Ca(2+). Residue histidine 163 coordinates Zn(2+). Residue glutamate 164 is part of the active site. Residues histidine 167 and aspartate 173 each contribute to the Zn(2+) site. A disulfide bridge links cysteine 179 with cysteine 192.

This sequence belongs to the peptidase M7 family. Ca(2+) is required as a cofactor. Zn(2+) serves as cofactor. The N-terminus is blocked.

The protein localises to the secreted. It carries out the reaction Hydrolyzes proteins with a preference for Tyr or Phe in the P1' position. Has no action on amino-acid p-nitroanilides.. The chain is Extracellular small neutral protease (snpA) from Streptomyces lividans.